Consider the following 463-residue polypeptide: NADH dehydrogenase [ubiquinone] iron-sulfur protein 2, mitochondrial (463 aa).

The N-terminal 33 residues, Met-1–Gly-33, are a transit peptide targeting the mitochondrion. Lys-62 is modified (N6-acetyllysine). The residue at position 118 (Arg-118) is a Symmetric dimethylarginine. [4Fe-4S] cluster contacts are provided by Cys-326, Cys-332, and Cys-347.

This sequence belongs to the complex I 49 kDa subunit family. In terms of assembly, core subunit of respiratory chain NADH dehydrogenase (Complex I) which is composed of 45 different subunits. Component of the iron-sulfur (IP) fragment of the enzyme. Interacts with NDUFAF3. Interacts with NDUFAF7. Interacts with CERS2. Requires [4Fe-4S] cluster as cofactor. Post-translationally, dimethylation at Arg-118 by NDUFAF7 takes place after NDUFS2 assembles into the complex I, leading to stabilize the early intermediate complex.

Its subcellular location is the mitochondrion inner membrane. The enzyme catalyses a ubiquinone + NADH + 5 H(+)(in) = a ubiquinol + NAD(+) + 4 H(+)(out). In terms of biological role, core subunit of the mitochondrial membrane respiratory chain NADH dehydrogenase (Complex I) which catalyzes electron transfer from NADH through the respiratory chain, using ubiquinone as an electron acceptor. Essential for the catalytic activity and assembly of complex I. Redox-sensitive, critical component of the oxygen-sensing pathway in the pulmonary vasculature which plays a key role in acute pulmonary oxygen-sensing and hypoxic pulmonary vasoconstriction. Plays an important role in carotid body sensing of hypoxia. Essential for glia-like neural stem and progenitor cell proliferation, differentiation and subsequent oligodendrocyte or neuronal maturation. This is NADH dehydrogenase [ubiquinone] iron-sulfur protein 2, mitochondrial (NDUFS2) from Bos taurus (Bovine).